The primary structure comprises 126 residues: Large ribosomal subunit protein bL12 (126 aa).

The interval 97 to 126 (PQPVKSGVSKEEAEEAKKQLAESGAEVEVK) is disordered. Residues 104–116 (VSKEEAEEAKKQL) are compositionally biased toward basic and acidic residues.

This sequence belongs to the bacterial ribosomal protein bL12 family. Homodimer. Part of the ribosomal stalk of the 50S ribosomal subunit. Forms a multimeric L10(L12)X complex, where L10 forms an elongated spine to which 2 to 4 L12 dimers bind in a sequential fashion. Binds GTP-bound translation factors.

Its function is as follows. Forms part of the ribosomal stalk which helps the ribosome interact with GTP-bound translation factors. Is thus essential for accurate translation. The protein is Large ribosomal subunit protein bL12 of Geotalea uraniireducens (strain Rf4) (Geobacter uraniireducens).